Here is a 277-residue protein sequence, read N- to C-terminus: DNA-binding transcriptional activator MhpR (277 aa).

Residues 12–74 (VRGLTRGLML…PSDDSFRLTI (63 aa)) form the HTH iclR-type domain. Positions 34-53 (VGLLAELSGLHRTTVRRLLE) form a DNA-binding region, H-T-H motif. In terms of domain architecture, IclR-ED spans 89 to 262 (ISALAAPLLG…AKQIEEGVES (174 aa)).

Activator of the mhpABCDFE operon coding for components of the 3-hydroxyphenylpropionate degradation pathway. This chain is DNA-binding transcriptional activator MhpR (mhpR), found in Escherichia coli (strain K12).